The primary structure comprises 862 residues: Leucine--tRNA ligase (862 aa).

Residues 44-54 (PYPSGRIHMGH) carry the 'HIGH' region motif. The 'KMSKS' region signature appears at 622 to 626 (KMSKS). Lysine 625 serves as a coordination point for ATP.

It belongs to the class-I aminoacyl-tRNA synthetase family.

The protein resides in the cytoplasm. The catalysed reaction is tRNA(Leu) + L-leucine + ATP = L-leucyl-tRNA(Leu) + AMP + diphosphate. This chain is Leucine--tRNA ligase, found in Rhodospirillum rubrum (strain ATCC 11170 / ATH 1.1.1 / DSM 467 / LMG 4362 / NCIMB 8255 / S1).